The primary structure comprises 134 residues: Urease subunit beta (134 aa).

This sequence belongs to the urease beta subunit family. As to quaternary structure, heterotrimer of UreA (gamma), UreB (beta) and UreC (alpha) subunits. Three heterotrimers associate to form the active enzyme.

The protein localises to the cytoplasm. The enzyme catalyses urea + 2 H2O + H(+) = hydrogencarbonate + 2 NH4(+). Its pathway is nitrogen metabolism; urea degradation; CO(2) and NH(3) from urea (urease route): step 1/1. This Staphylococcus saprophyticus subsp. saprophyticus (strain ATCC 15305 / DSM 20229 / NCIMB 8711 / NCTC 7292 / S-41) protein is Urease subunit beta.